We begin with the raw amino-acid sequence, 402 residues long: tRNA pseudouridine synthase Pus10 (402 aa).

D215 serves as the catalytic Nucleophile. Residues E370 to T402 form a disordered region. Residues G380–P389 are compositionally biased toward basic residues.

It belongs to the pseudouridine synthase Pus10 family.

It carries out the reaction uridine(54) in tRNA = pseudouridine(54) in tRNA. The enzyme catalyses uridine(55) in tRNA = pseudouridine(55) in tRNA. Its function is as follows. Responsible for synthesis of pseudouridine from uracil-54 and uracil-55 in the psi GC loop of transfer RNAs. This Cenarchaeum symbiosum (strain A) protein is tRNA pseudouridine synthase Pus10.